Reading from the N-terminus, the 284-residue chain is MQKEFAFFPGCVLSQAAIESKKSIEAIAPVLGIKLREIEGWSCCGASQAQCVDPLATLVANARNLALAEQMNLPVLTTCSTCLLMLTRAKAELDRGAKDQINSFLAKGNMSYQGTSEVTSLLWVLAQNVEELKSKVKKPLSNLKVAVFYGCHSLRPEKDLGFESSTNPTSFETIVKALGAQVVPFEKRLNCCGFHAVYPAESSAMKMTSGIINTAAKSEAHCVVTPCPLCQMQLDIYQEDAQKIAKSKERVPVLHLSQLVGLALGIPAKELGLNHNVIDATKLG.

In terms of assembly, the MFR complex is composed of three subunits: a flavoprotein (SdhA), an iron-sulfur protein (SdhB), and one hydrophobic anchor protein (SdhE).

The protein resides in the periplasm. It localises to the cell membrane. It carries out the reaction 8-methylmenaquinone-6 + succinate = 8-methylmenaquinol-6 + fumarate. Membrane anchor subunit of 8-methylmenaquinol:fumarate reductase (MFR), that catalyzes the reduction of fumarate using 8-methylmenaquinol-6 as electron donor. The complex shows no succinate oxidation activity. Is involved in anaerobic metabolism. SdhE likely contains the quinol/quinone binding site. The protein is 8-methylmenaquinol:fumarate reductase membrane anchor subunit of Wolinella succinogenes (strain ATCC 29543 / DSM 1740 / CCUG 13145 / JCM 31913 / LMG 7466 / NCTC 11488 / FDC 602W) (Vibrio succinogenes).